Reading from the N-terminus, the 107-residue chain is Small ribosomal subunit protein eS25 (107 aa).

Residues 1–35 (MPPKQQLSKAAKAAAAMAGGKKSKKKWSKKSHKDK) are disordered. Low complexity predominate over residues 8-20 (SKAAKAAAAMAGG). Over residues 21–35 (KKSKKKWSKKSHKDK) the composition is skewed to basic residues.

It belongs to the eukaryotic ribosomal protein eS25 family.

The sequence is that of Small ribosomal subunit protein eS25 (RPS25) from Candida glabrata (strain ATCC 2001 / BCRC 20586 / JCM 3761 / NBRC 0622 / NRRL Y-65 / CBS 138) (Yeast).